Here is a 39-residue protein sequence, read N- to C-terminus: Cytochrome b559 subunit beta (39 aa).

The helical transmembrane segment at 14 to 30 (WLAVHGLAVPTVFFLGS) threads the bilayer. His-18 contributes to the heme binding site.

This sequence belongs to the PsbE/PsbF family. As to quaternary structure, heterodimer of an alpha subunit and a beta subunit. PSII is composed of 1 copy each of membrane proteins PsbA, PsbB, PsbC, PsbD, PsbE, PsbF, PsbH, PsbI, PsbJ, PsbK, PsbL, PsbM, PsbT, PsbX, PsbY, PsbZ, Psb30/Ycf12, at least 3 peripheral proteins of the oxygen-evolving complex and a large number of cofactors. It forms dimeric complexes. It depends on heme b as a cofactor.

The protein localises to the plastid. Its subcellular location is the chloroplast thylakoid membrane. In terms of biological role, this b-type cytochrome is tightly associated with the reaction center of photosystem II (PSII). PSII is a light-driven water:plastoquinone oxidoreductase that uses light energy to abstract electrons from H(2)O, generating O(2) and a proton gradient subsequently used for ATP formation. It consists of a core antenna complex that captures photons, and an electron transfer chain that converts photonic excitation into a charge separation. The sequence is that of Cytochrome b559 subunit beta from Welwitschia mirabilis (Tree tumbo).